The sequence spans 119 residues: Large ribosomal subunit protein uL18 (119 aa).

Positions 1 to 20 (MISKPDKNKTRQKRHTRVRG) are disordered. The span at 10-20 (TRQKRHTRVRG) shows a compositional bias: basic residues.

Belongs to the universal ribosomal protein uL18 family. As to quaternary structure, part of the 50S ribosomal subunit; part of the 5S rRNA/L5/L18/L25 subcomplex. Contacts the 5S and 23S rRNAs.

In terms of biological role, this is one of the proteins that bind and probably mediate the attachment of the 5S RNA into the large ribosomal subunit, where it forms part of the central protuberance. This Latilactobacillus sakei subsp. sakei (strain 23K) (Lactobacillus sakei subsp. sakei) protein is Large ribosomal subunit protein uL18.